Reading from the N-terminus, the 41-residue chain is Tachystatin-C (41 aa).

Intrachain disulfides connect Cys12-Cys28, Cys19-Cys33, and Cys27-Cys38.

Granular hemocytes, small secretory granules.

It is found in the secreted. Binds to chitin. Shows strong activity against E.coli (IC(50) is 1.2 ug/ml). Is also very active against S.aureus (IC(50) is 0.8 ug/ml), C.albicans (IC(50) is 0.9 ug/ml) and P.pastoris (IC(50) is 0.3 ug/ml). Binds to chitin (5.2 uM are required to obtain 50% of binding). Causes hemolysis on sheep erythrocytes, probably by forming ion-permeable pores. The chain is Tachystatin-C from Tachypleus tridentatus (Japanese horseshoe crab).